Here is a 726-residue protein sequence, read N- to C-terminus: Dipeptidyl-peptidase 5 (726 aa).

The signal sequence occupies residues 1–19; it reads MAAAKWLIASLAFASSGLA. 2 N-linked (GlcNAc...) asparagine glycosylation sites follow: Asn-96 and Asn-252. The segment at 269-291 is disordered; that stretch reads AEPINKRNGPRTPQGIEGASSSP. Residue Ser-558 is the Charge relay system of the active site. 2 N-linked (GlcNAc...) asparagine glycosylation sites follow: Asn-605 and Asn-638. Active-site charge relay system residues include Asp-641 and His-673. Asn-699 carries an N-linked (GlcNAc...) asparagine glycan.

Belongs to the peptidase S9C family.

It is found in the secreted. The sequence is that of Dipeptidyl-peptidase 5 (DPPV) from Trichophyton schoenleinii.